The following is a 570-amino-acid chain: Phosphoribosylaminoimidazole carboxylase (570 aa).

Positions 110–297 (KQHLVKNRIP…QFEAHLRAIL (188 aa)) constitute an ATP-grasp domain. An ATP-binding site is contributed by 137–192 (GSSLGYPFVLKSRTLAYDGRGNFVVKSEEDIEKGLEFLANRPLYAEKWASFKKELS).

In the C-terminal section; belongs to the AIR carboxylase family. Class I subfamily.

The enzyme catalyses 5-amino-1-(5-phospho-D-ribosyl)imidazole-4-carboxylate + H(+) = 5-amino-1-(5-phospho-beta-D-ribosyl)imidazole + CO2. It functions in the pathway purine metabolism; IMP biosynthesis via de novo pathway; 5-amino-1-(5-phospho-D-ribosyl)imidazole-4-carboxylate from 5-amino-1-(5-phospho-D-ribosyl)imidazole (carboxylase route): step 1/1. The sequence is that of Phosphoribosylaminoimidazole carboxylase (ADE2) from Candida glabrata (strain ATCC 2001 / BCRC 20586 / JCM 3761 / NBRC 0622 / NRRL Y-65 / CBS 138) (Yeast).